A 129-amino-acid chain; its full sequence is VVSQADARGEFLSTEQLDALTAVVARRLDVVNRITSNASAIVTNAARSLFEEQPNLIAPGGNAYTNRRRDMEIILRYVTYAAIAGDASVLDDRRETYQALGTPGASVAVGVGKGDCSSLVSEVASYFDR.

N4-methylasparagine is present on asparagine 62. Cysteine 116 provides a ligand contact to (2R,3E)-phycocyanobilin.

The protein belongs to the phycobiliprotein family. Heterodimer of an alpha and a beta subunit, which further assembles into trimers and the trimers into hexamers. Two isomers exist. Post-translationally, contains two covalently linked bilin chromophores.

The protein resides in the cellular thylakoid membrane. Light-harvesting photosynthetic bile pigment-protein from the phycobiliprotein complex (phycobilisome, PBS). Phycocyanin is the major phycobiliprotein in the PBS rod. In Aphanizomenon flos-aquae, this protein is C-phycocyanin beta subunit.